A 303-amino-acid chain; its full sequence is MKFLVVGAGGVGGYIGGRLSEKGNDVTFLVRQKRAEQLKKTGLVIHSEKGNVSFQPELISAGETGQFDVVIIASKAYSLGQVIEDVKPFIHQESVIIPFLNGYRHYEQLFAAFSKEQVLGGLCFIESALDNKGEIHHTSASHRFVFGEWNGERTERIRALEEAFSGVKAEVIISGHIEKDIWKKYLFIAAQAGITTLFQRPLGPILATEAGRHTAQTLIGEICTVLRKEGVPADPALEEESFRTMTSMSYHMKSSMLRDMENGQTTEGDHLHGFLIEKAKRLSLAAPVLETVYANLQMYEAEK.

Residues 7–12 (GAGGVG) and asparagine 101 each bind NADP(+). Catalysis depends on lysine 184, which acts as the Proton donor. Glutamate 267 lines the NADP(+) pocket.

It belongs to the ketopantoate reductase family.

This is an uncharacterized protein from Bacillus subtilis (strain 168).